A 133-amino-acid polypeptide reads, in one-letter code: Brain natriuretic peptide (133 aa).

Residues 1-22 form the signal peptide; the sequence is MVVSFVSICGLLLIFNLPLSTS. Residues 44–53 are compositionally biased toward acidic residues; sequence SMSEETEEDQ. Disordered regions lie at residues 44-76 and 93-112; these read SMSE…NRDQ and TRKN…FGRR. An intrachain disulfide couples Cys108 to Cys124.

The protein belongs to the natriuretic peptide family.

It is found in the secreted. Its function is as follows. Cardiac hormone which may function as a paracrine antifibrotic factor in the heart. Also plays a key role in cardiovascular homeostasis through natriuresis, diuresis, vasorelaxation, and inhibition of renin and aldosterone secretion. Has a cGMP-stimulating activity. The polypeptide is Brain natriuretic peptide (nppb) (Takifugu rubripes (Japanese pufferfish)).